The sequence spans 391 residues: cAMP-dependent protein kinase regulatory subunit (391 aa).

Residues 1–84 form a disordered region; that stretch reads MFKSPFGANA…PPNPESYPAQ (84 aa). The dimerization and phosphorylation stretch occupies residues 1-131; sequence MFKSPFGANA…RLKTAIAGNF (131 aa). Positions 38–55 are enriched in polar residues; the sequence is TVTSPTSPNFGMNAQSMF. The residue at position 92 (Ser-92) is a Phosphoserine. Residues 132–261, Glu-210, Arg-219, 264–381, Glu-331, and Arg-340 each bind 3',5'-cyclic AMP; these read LFSH…FLRE and LLQT…DIKT.

It belongs to the cAMP-dependent kinase regulatory chain family. As to quaternary structure, tetramer, composed of 2 regulatory (R) and 2 catalytic (C) subunits. In the presence of cAMP it dissociates into 2 active monomeric C subunits and an R dimer.

The sequence is that of cAMP-dependent protein kinase regulatory subunit (PKAR) from Colletotrichum orbiculare (strain 104-T / ATCC 96160 / CBS 514.97 / LARS 414 / MAFF 240422) (Cucumber anthracnose fungus).